The primary structure comprises 647 residues: Sodium/nucleoside cotransporter 1 (647 aa).

At 1-79 the chain is on the cytoplasmic side; it reads MEDNTPRQRD…VRRFCREHTQ (79 aa). A disordered region spans residues 34 to 58; that stretch reads EGRAPGSDSSPAEVGGGWSKAGPEH. A helical transmembrane segment spans residues 80–103; that stretch reads LFRWICTGLLCTAFAAFLLIACLL. The Extracellular segment spans residues 104–108; sequence DFQRA. A helical transmembrane segment spans residues 109–127; sequence LALFVLFCVVLFFLAHSLL. At 128 to 146 the chain is on the cytoplasmic side; the sequence is KRLLGPKLLRCVKPLRHPC. Residues 147–166 traverse the membrane as a helical segment; that stretch reads LNLWFKRGLALAAFLGLVLW. Residues 167–177 are Extracellular-facing; sequence LVLDTAQRPEQ. The helical transmembrane segment at 178 to 194 threads the bilayer; sequence LVSFGGICVFILLLFAG. Residues 195–200 lie on the Cytoplasmic side of the membrane; that stretch reads SKHHRA. The helical transmembrane segment at 201–221 threads the bilayer; sequence VSWRAVSWGLGLQFALGLFVI. The Extracellular segment spans residues 222-260; that stretch reads RTEPGFIAFQWLGDQIQIFLSYTEAGSSFVFGEALVKDV. Residues 261–282 form a helical membrane-spanning segment; sequence FAFQVLPIIVFFSCAMSVLYYV. Residues 283 to 293 lie on the Cytoplasmic side of the membrane; it reads GLMQWVILKIS. The chain crosses the membrane as a helical span at residues 294-317; it reads WLMQATMGTTATETLSVAGNIFVS. Residues 318-336 are Extracellular-facing; the sequence is QTEAPLLIRPYLADMTLSE. Residues 337–359 form a helical membrane-spanning segment; that stretch reads IHVVMTGGYATIAGSLLGAYISF. Residues 360 to 365 are Cytoplasmic-facing; it reads GIDAAS. The chain crosses the membrane as a helical span at residues 366–385; it reads LIAASVMAAPCALALSKLVY. Topologically, residues 386-422 are extracellular; it reads PEVEESKFKREEGVKLTYGDAQNLLEAASSGAAMSVR. The helical transmembrane segment at 423 to 445 threads the bilayer; it reads VVTNIAANLIAFLAVLAFINAAL. At 446–456 the chain is on the cytoplasmic side; that stretch reads SWLGDMVDVQG. Residues 457–478 form a helical membrane-spanning segment; that stretch reads LSFQLICSYVLRPVAFLMGVAW. Over 479–533 the chain is Extracellular; the sequence is EDCPVVAELLGMKLFLNEFVAYQELSGYKQRRLAGAEEWVGSRKQWISVRAEILT. Residues 534–557 traverse the membrane as a helical segment; it reads TYALCGFANFSSIGIMLGGLTSMV. Over 558–568 the chain is Cytoplasmic; the sequence is PQRKGDFSQIV. Residues 569 to 591 form a helical membrane-spanning segment; sequence LRALCTGACVSLVNACVAGILYV. Over 592–647 the chain is Extracellular; sequence PRGAEVDCVSFLNTTLSSSSFEVYQCCRQFFQSTSLEFSPEALDNCCRFYNHTICV. Asn604 and Asn642 each carry an N-linked (GlcNAc...) asparagine glycan.

Belongs to the concentrative nucleoside transporter (CNT) (TC 2.A.41) family. In terms of processing, N-glycosylated. N-glycosylation is required for localization to the plasma membrane and the transporter activity.

The protein resides in the cell membrane. It is found in the apical cell membrane. It catalyses the reaction uridine(out) + Na(+)(out) = uridine(in) + Na(+)(in). The enzyme catalyses thymidine(out) + Na(+)(out) = thymidine(in) + Na(+)(in). The catalysed reaction is cytidine(out) + Na(+)(out) = cytidine(in) + Na(+)(in). It carries out the reaction adenosine(out) + Na(+)(out) = adenosine(in) + Na(+)(in). Its activity is regulated as follows. Due to its high apparent affinity but slow transport, adenosine could act as a negative regulator of pyrimidine transport under some conditions. Functionally, sodium and pyrimidine nucleoside symporter of the plasma membrane that imports uridine, thymidine and cytidine into cells by coupling their transport to the transmembrane sodium electrochemical gradient. Also transports adenosine, an atypical substrate transported with high apparent affinity, but low maximum velocity. Therefore, exhibits the transport characteristics of the nucleoside transport system cit or N2 subtype (N2/cit). Involved in renal nucleoside (re)absorption. This Sus scrofa (Pig) protein is Sodium/nucleoside cotransporter 1 (SLC28A1).